Reading from the N-terminus, the 581-residue chain is Proline--tRNA ligase (581 aa).

This sequence belongs to the class-II aminoacyl-tRNA synthetase family. ProS type 1 subfamily. In terms of assembly, homodimer.

The protein localises to the cytoplasm. It catalyses the reaction tRNA(Pro) + L-proline + ATP = L-prolyl-tRNA(Pro) + AMP + diphosphate. Functionally, catalyzes the attachment of proline to tRNA(Pro) in a two-step reaction: proline is first activated by ATP to form Pro-AMP and then transferred to the acceptor end of tRNA(Pro). As ProRS can inadvertently accommodate and process non-cognate amino acids such as alanine and cysteine, to avoid such errors it has two additional distinct editing activities against alanine. One activity is designated as 'pretransfer' editing and involves the tRNA(Pro)-independent hydrolysis of activated Ala-AMP. The other activity is designated 'posttransfer' editing and involves deacylation of mischarged Ala-tRNA(Pro). The misacylated Cys-tRNA(Pro) is not edited by ProRS. The sequence is that of Proline--tRNA ligase from Azoarcus sp. (strain BH72).